A 261-amino-acid polypeptide reads, in one-letter code: Chanoclavine-I dehydrogenase easD (261 aa).

The signal sequence occupies residues Met-1–Ala-20. Ile-18 lines the NADP(+) pocket. Asn-43 carries N-linked (GlcNAc...) asparagine glycosylation. Asp-66, Arg-132, Tyr-166, Lys-170, and Thr-201 together coordinate NADP(+). Tyr-166 serves as the catalytic Proton donor. The Lowers pKa of active site Tyr role is filled by Lys-170.

This sequence belongs to the short-chain dehydrogenases/reductases (SDR) family. Homotetramer.

It catalyses the reaction chanoclavine-I + NAD(+) = chanoclavine-I aldehyde + NADH + H(+). The protein operates within alkaloid biosynthesis; ergot alkaloid biosynthesis. Its function is as follows. Chanoclavine-I dehydrogenase; part of the gene cluster that mediates the biosynthesis of fungal ergot alkaloid. DmaW catalyzes the first step of ergot alkaloid biosynthesis by condensing dimethylallyl diphosphate (DMAP) and tryptophan to form 4-dimethylallyl-L-tryptophan. The second step is catalyzed by the methyltransferase easF that methylates 4-dimethylallyl-L-tryptophan in the presence of S-adenosyl-L-methionine, resulting in the formation of 4-dimethylallyl-L-abrine. The catalase easC and the FAD-dependent oxidoreductase easE then transform 4-dimethylallyl-L-abrine to chanoclavine-I which is further oxidized by easD in the presence of NAD(+), resulting in the formation of chanoclavine-I aldehyde. Agroclavine dehydrogenase easG then mediates the conversion of chanoclavine-I aldehyde to agroclavine via a non-enzymatic adduct reaction: the substrate is an iminium intermediate that is formed spontaneously from chanoclavine-I aldehyde in the presence of glutathione. The presence of easA is not required to complete this reaction. Further conversion of agroclavine to paspalic acid is a two-step process involving oxidation of agroclavine to elymoclavine and of elymoclavine to paspalic acid, the second step being performed by the elymoclavine oxidase cloA. Paspalic acid is then further converted to D-lysergic acid. Ergopeptines are assembled from D-lysergic acid and three different amino acids by the D-lysergyl-peptide-synthetases composed each of a monomudular and a trimodular nonribosomal peptide synthetase subunit. LpsB and lpsC encode the monomodular subunits responsible for D-lysergic acid activation and incorporation into the ergopeptine backbone. LpsA1 and A2 subunits encode the trimodular nonribosomal peptide synthetase assembling the tripeptide portion of ergopeptines. LpsA1 is responsible for formation of the major ergopeptine, ergotamine, and lpsA2 for alpha-ergocryptine, the minor ergopeptine of the total alkaloid mixture elaborated by C.purpurea. D-lysergyl-tripeptides are assembled by the nonribosomal peptide synthetases and released as N-(D-lysergyl-aminoacyl)-lactams. Cyclolization of the D-lysergyl-tripeptides is performed by the Fe(2+)/2-ketoglutarate-dependent dioxygenase easH which introduces a hydroxyl group into N-(D-lysergyl-aminoacyl)-lactam at alpha-C of the aminoacyl residue followed by spontaneous condensation with the terminal lactam carbonyl group. This Claviceps purpurea (strain 20.1) (Ergot fungus) protein is Chanoclavine-I dehydrogenase easD.